The chain runs to 255 residues: 4-hydroxy-tetrahydrodipicolinate reductase (255 aa).

NAD(+) is bound by residues 8 to 13 (GASGRM), 89 to 91 (GTT), and 114 to 117 (SSNY). His-146 (proton donor/acceptor) is an active-site residue. His-147 is a binding site for (S)-2,3,4,5-tetrahydrodipicolinate. Residue Lys-150 is the Proton donor of the active site. 156–157 (GT) is a binding site for (S)-2,3,4,5-tetrahydrodipicolinate.

Belongs to the DapB family.

The protein localises to the cytoplasm. The catalysed reaction is (S)-2,3,4,5-tetrahydrodipicolinate + NAD(+) + H2O = (2S,4S)-4-hydroxy-2,3,4,5-tetrahydrodipicolinate + NADH + H(+). It carries out the reaction (S)-2,3,4,5-tetrahydrodipicolinate + NADP(+) + H2O = (2S,4S)-4-hydroxy-2,3,4,5-tetrahydrodipicolinate + NADPH + H(+). It participates in amino-acid biosynthesis; L-lysine biosynthesis via DAP pathway; (S)-tetrahydrodipicolinate from L-aspartate: step 4/4. Functionally, catalyzes the conversion of 4-hydroxy-tetrahydrodipicolinate (HTPA) to tetrahydrodipicolinate. The protein is 4-hydroxy-tetrahydrodipicolinate reductase of Methanoregula boonei (strain DSM 21154 / JCM 14090 / 6A8).